Here is a 367-residue protein sequence, read N- to C-terminus: Peptide chain release factor 1 (367 aa).

N5-methylglutamine is present on Q238.

This sequence belongs to the prokaryotic/mitochondrial release factor family. Methylated by PrmC. Methylation increases the termination efficiency of RF1.

Its subcellular location is the cytoplasm. Peptide chain release factor 1 directs the termination of translation in response to the peptide chain termination codons UAG and UAA. The protein is Peptide chain release factor 1 of Dictyoglomus turgidum (strain DSM 6724 / Z-1310).